The sequence spans 381 residues: E3 ubiquitin-protein ligase RNF34 (381 aa).

An FYVE-type zinc finger spans residues 56–107; that stretch reads EGPNIVCKACGLSFSVFRKKHVCCDCKKDFCSLCSVSQENLRRCSTCHLLQE. An SAP 1 domain is found at 115–134; the sequence is LMRLKVKDLRQYLLLRNVPT. At serine 169 the chain carries Phosphoserine. The disordered stretch occupies residues 216–261; that stretch reads LASANTDDEDGEEDDDDDDDDDDEDDDEQEENLEEQNPGLSKKKAR. Residues 221 to 249 are compositionally biased toward acidic residues; the sequence is TDDEDGEEDDDDDDDDDDEDDDEQEENLE. A phosphoserine mark is found at serine 263 and serine 265. The SAP 2 domain occupies 273–287; the sequence is VEGMSVRQLKEILAR. An RING-type zinc finger spans residues 334–369; that stretch reads CRICMDAVIDCVLLECGHMVTCTKCGKRMSECPICR.

In terms of assembly, interacts with CASP8 and CASP10. Interacts with p53/TP53; involved in p53/TP53 ubiquitination. Interacts (via RING-type zinc finger) with MDM2; the interaction stabilizes MDM2. Interacts (via RING-type zinc finger) with PPARGC1A. Interacts with NOD1. Post-translationally, proteolytically cleaved by caspases upon induction of apoptosis by TNF. Autoubiquitinated (in vitro). In terms of tissue distribution, ubiquitous. Detected in brain, cerebellum, midbrain, hippocampus, striatum, heart, lung, kidney, muscle, spleen and testis.

The protein localises to the cell membrane. It localises to the endomembrane system. Its subcellular location is the nucleus. The protein resides in the nucleus speckle. It is found in the cytoplasm. The protein localises to the cytosol. The enzyme catalyses S-ubiquitinyl-[E2 ubiquitin-conjugating enzyme]-L-cysteine + [acceptor protein]-L-lysine = [E2 ubiquitin-conjugating enzyme]-L-cysteine + N(6)-ubiquitinyl-[acceptor protein]-L-lysine.. The protein operates within protein modification; protein ubiquitination. E3 ubiquitin-protein ligase that regulates several biological processes through the ubiquitin-mediated proteasomal degradation of various target proteins. Ubiquitinates the caspases CASP8 and CASP10, promoting their proteasomal degradation, to negatively regulate cell death downstream of death domain receptors in the extrinsic pathway of apoptosis. May mediate 'Lys-48'-linked polyubiquitination of RIPK1 and its subsequent proteasomal degradation thereby indirectly regulating the tumor necrosis factor-mediated signaling pathway. Negatively regulates p53/TP53 through its direct ubiquitination and targeting to proteasomal degradation. Indirectly, may also negatively regulate p53/TP53 through ubiquitination and degradation of SFN. Mediates PPARGC1A proteasomal degradation probably through ubiquitination thereby indirectly regulating the metabolism of brown fat cells. Possibly involved in innate immunity, through 'Lys-48'-linked polyubiquitination of NOD1 and its subsequent proteasomal degradation. This chain is E3 ubiquitin-protein ligase RNF34, found in Rattus norvegicus (Rat).